The primary structure comprises 150 residues: Large ribosomal subunit protein bL9 (150 aa).

The protein belongs to the bacterial ribosomal protein bL9 family.

In terms of biological role, binds to the 23S rRNA. The protein is Large ribosomal subunit protein bL9 of Polaromonas sp. (strain JS666 / ATCC BAA-500).